A 427-amino-acid chain; its full sequence is U1 small nuclear ribonucleoprotein 70 kDa (427 aa).

2 disordered regions span residues 82–102 (EPGDPEYAPPKPEVELPSQKR) and 215–427 (RGRT…EYVR). A compositionally biased stretch (basic and acidic residues) spans 93–102 (PEVELPSQKR). The RRM domain occupies 138-216 (KTLFVSRLNY…RRVLVDVERG (79 aa)). Residues 227–241 (LGGGLGTSRVGGGEE) are compositionally biased toward gly residues. Basic and acidic residues-rich tracts occupy residues 257 to 402 (EPSR…RYDK) and 409 to 427 (RYEREYKRSKRSESREYVR). Serine 282 is subject to Phosphoserine.

Component of the spliceosome. Interacts with CYP63, U2AF35A, U2AF35B, SRZ21, RSZ22, SR34, SR45, SR45A and SCL33. In terms of processing, phosphorylated. The association and dissociation with SR45 is not affected by the phosphorylation status. Ubiquitous.

It localises to the nucleus speckle. The protein localises to the nucleus. Its subcellular location is the nucleoplasm. In terms of biological role, mediates the splicing of pre-mRNA by binding to the loop I region of U1-snRNA. This is U1 small nuclear ribonucleoprotein 70 kDa (RNU1) from Arabidopsis thaliana (Mouse-ear cress).